Reading from the N-terminus, the 533-residue chain is Lysine--tRNA ligase (533 aa).

The 'HIGH' region signature appears at 28-36 (PSGHIHIGN). A 'KMSKS' region motif is present at residues 278 to 282 (PMSSS).

It belongs to the class-I aminoacyl-tRNA synthetase family.

It localises to the cytoplasm. It catalyses the reaction tRNA(Lys) + L-lysine + ATP = L-lysyl-tRNA(Lys) + AMP + diphosphate. In Methanococcus maripaludis (strain DSM 14266 / JCM 13030 / NBRC 101832 / S2 / LL), this protein is Lysine--tRNA ligase (lysS).